A 369-amino-acid polypeptide reads, in one-letter code: tRNA/tmRNA (uracil-C(5))-methyltransferase (369 aa).

S-adenosyl-L-methionine-binding residues include glutamine 190, tyrosine 218, asparagine 223, glutamate 239, and aspartate 301. Cysteine 326 (nucleophile) is an active-site residue. Glutamate 360 serves as the catalytic Proton acceptor.

Belongs to the class I-like SAM-binding methyltransferase superfamily. RNA M5U methyltransferase family. TrmA subfamily.

It catalyses the reaction uridine(54) in tRNA + S-adenosyl-L-methionine = 5-methyluridine(54) in tRNA + S-adenosyl-L-homocysteine + H(+). The catalysed reaction is uridine(341) in tmRNA + S-adenosyl-L-methionine = 5-methyluridine(341) in tmRNA + S-adenosyl-L-homocysteine + H(+). Its function is as follows. Dual-specificity methyltransferase that catalyzes the formation of 5-methyluridine at position 54 (m5U54) in all tRNAs, and that of position 341 (m5U341) in tmRNA (transfer-mRNA). The sequence is that of tRNA/tmRNA (uracil-C(5))-methyltransferase from Vibrio parahaemolyticus serotype O3:K6 (strain RIMD 2210633).